A 395-amino-acid chain; its full sequence is Vomeronasal type-1 receptor 2 (395 aa).

Residues 12 to 32 (LYPINISAAWHLGPLPVSCFV) form a helical membrane-spanning segment. Over 33–51 (SNKYQCSLAFGATTGLRVL) the chain is Extracellular. The helical transmembrane segment at 52-72 (VVVVPQTQLSFLSSLCLVSLF) threads the bilayer. At 73–93 (LHSLVSAHGEKPTKPVGLDPT) the chain is on the cytoplasmic side. A helical membrane pass occupies residues 94–114 (LFQVVVGILGNFSLLYYYMFL). At 115 to 170 (YFRGYKPRSTDLILRHLTVADSLVILSKRIPETMATFGLKHFDNYFGCKFLLYAHR) the chain is on the extracellular side. A helical membrane pass occupies residues 171 to 191 (VGRGVSIGSTCLLSVFQVITI). The Cytoplasmic portion of the chain corresponds to 192 to 208 (NPRNSRWAEMKVKAPTY). A helical transmembrane segment spans residues 209-229 (IGLSNILCWAFHMLVNAIFPI). The Extracellular portion of the chain corresponds to 230–267 (YTTGKWSNNNITKKGDLGYCSAPLSDEVTKSVYAALTS). Residue asparagine 239 is glycosylated (N-linked (GlcNAc...) asparagine). The helical transmembrane segment at 268-288 (FHDVLCLGLMLWASSSIVLVL) threads the bilayer. Over 289 to 316 (YRHKQQVQHICRNNLYPNSSPGNRAIQS) the chain is Cytoplasmic. Residues 317 to 337 (ILALVSTFALCYALSFITYVY) form a helical membrane-spanning segment. The Extracellular portion of the chain corresponds to 338-346 (LALFDNSSW). N-linked (GlcNAc...) asparagine glycosylation occurs at asparagine 343. A helical membrane pass occupies residues 347–367 (WLVNTAALIIACFPTISPFVL). Over 368 to 395 (MCRDPSRSRLCSICCRRNRRFFHDFRKM) the chain is Cytoplasmic.

This sequence belongs to the G-protein coupled receptor 1 family.

It is found in the cell membrane. Functionally, putative pheromone receptor. The chain is Vomeronasal type-1 receptor 2 (VN1R2) from Homo sapiens (Human).